The following is an 81-amino-acid chain: uncharacterized protein (81 aa).

Belongs to the ycf70 family.

Its subcellular location is the plastid. It is found in the chloroplast. This is an uncharacterized protein from Saccharum officinarum (Sugarcane).